We begin with the raw amino-acid sequence, 206 residues long: Thymidylate kinase (206 aa).

ATP is bound at residue 10-17; the sequence is GIDGAGKS.

Belongs to the thymidylate kinase family.

It catalyses the reaction dTMP + ATP = dTDP + ADP. In terms of biological role, phosphorylation of dTMP to form dTDP in both de novo and salvage pathways of dTTP synthesis. In Neisseria meningitidis serogroup B (strain ATCC BAA-335 / MC58), this protein is Thymidylate kinase (tmk).